The chain runs to 150 residues: Transcription antitermination protein NusB (150 aa).

This sequence belongs to the NusB family.

Involved in transcription antitermination. Required for transcription of ribosomal RNA (rRNA) genes. Binds specifically to the boxA antiterminator sequence of the ribosomal RNA (rrn) operons. This Streptococcus pyogenes serotype M2 (strain MGAS10270) protein is Transcription antitermination protein NusB.